Consider the following 554-residue polypeptide: Undecaprenyl phosphate-alpha-4-amino-4-deoxy-L-arabinose arabinosyl transferase (554 aa).

A run of 11 helical transmembrane segments spans residues 4 to 24 (LKDSGAALLALFFVLVYLLPV), 87 to 107 (FGSIFSTALSAVLVYWLATLL), 115 to 135 (VLATLIYLSFLLVFGIGTYAV), 178 to 198 (FMTKGFLALAVPVIAVLPIVI), 206 to 226 (LVVFGPIAIVCAVLLSLPWAL), 262 to 282 (YLPILCIGVLPWLGLLPGALF), 293 to 313 (ELFFLLSWVVMPLLFFSVAKG), 315 to 335 (LPTYILPCMAPLSLLMAAYAT), 351 to 371 (VINLLFGVACALVIVVIGLGL), 384 to 404 (QKVWLGVLAFAGWGVTGFITL), and 414 to 434 (AAACPLLFILLVGYLIPQQVV).

It belongs to the glycosyltransferase 83 family.

It is found in the cell inner membrane. It carries out the reaction 4-amino-4-deoxy-alpha-L-arabinopyranosyl di-trans,octa-cis-undecaprenyl phosphate + lipid IVA = lipid IIA + di-trans,octa-cis-undecaprenyl phosphate.. Its pathway is lipopolysaccharide metabolism; 4-amino-4-deoxy-beta-L-arabinose-lipid A biosynthesis. Functionally, catalyzes the transfer of the L-Ara4N moiety of the glycolipid undecaprenyl phosphate-alpha-L-Ara4N to lipid A. The modified arabinose is attached to lipid A and is required for resistance to polymyxin and cationic antimicrobial peptides. The chain is Undecaprenyl phosphate-alpha-4-amino-4-deoxy-L-arabinose arabinosyl transferase from Yersinia pseudotuberculosis serotype O:1b (strain IP 31758).